Reading from the N-terminus, the 346-residue chain is Annexin A1 (346 aa).

Serine 5 bears the Phosphoserine; by TRPM7 mark. Glutamine 19 is covalently cross-linked (Isoglutamyl lysine isopeptide (Gln-Lys) (interchain with K-?)). Tyrosine 21 carries the post-translational modification Phosphotyrosine; by EGFR. Serine 27 is subject to Phosphoserine; by PKC. Residues serine 34 and serine 37 each carry the phosphoserine modification. Annexin repeat units follow at residues 42-113 (FDAS…ALLK), 114-185 (TPAQ…SLAK), 197-269 (DLAD…AIVK), and 273-344 (STPA…ALCG). Lysine 58 carries the post-translational modification N6-acetyllysine. The Ca(2+) site is built by glycine 59, valine 60, glutamate 62, lysine 97, leucine 100, glutamate 105, methionine 127, glycine 129, glycine 131, threonine 132, and glutamate 134. Residue threonine 136 is modified to Phosphothreonine. Residues aspartate 171, glycine 210, and arginine 213 each contribute to the Ca(2+) site. Lysine 214 is covalently cross-linked (Glycyl lysine isopeptide (Lys-Gly) (interchain with G-Cter in SUMO1); alternate). Residue lysine 214 forms a Glycyl lysine isopeptide (Lys-Gly) (interchain with G-Cter in SUMO2); alternate linkage. Glycine 215 contributes to the Ca(2+) binding site. Lysine 239 bears the N6-acetyllysine mark. Positions 253, 255, and 256 each coordinate Ca(2+). Lysine 257 is covalently cross-linked (Glycyl lysine isopeptide (Lys-Gly) (interchain with G-Cter in SUMO1)). Ca(2+) is bound by residues glutamate 261, methionine 286, glycine 288, and glycine 290. Lysine 312 carries the post-translational modification N6-acetyllysine. An intrachain disulfide couples cysteine 324 to cysteine 343. Leucine 328, glutamate 330, and threonine 331 together coordinate Ca(2+). Residue lysine 332 forms a Glycyl lysine isopeptide (Lys-Gly) (interchain with G-Cter in SUMO1) linkage. A Ca(2+)-binding site is contributed by glutamate 336.

This sequence belongs to the annexin family. As to quaternary structure, homodimer; non-covalently linked. Homodimer; linked by transglutamylation. Homodimers linked by transglutamylation are observed in placenta, but not in other tissues. Interacts with S100A11. Heterotetramer, formed by two molecules each of S100A11 and ANXA1. Interacts with DYSF. Interacts with EGFR. Post-translationally, phosphorylated by protein kinase C, EGFR and TRPM7. Phosphorylated in response to EGF treatment. In terms of processing, sumoylated. Proteolytically cleaved by cathepsin CTSG to release the active N-terminal peptide Ac2-26.

Its subcellular location is the nucleus. The protein localises to the cytoplasm. The protein resides in the cell projection. It localises to the cilium. It is found in the basolateral cell membrane. Its subcellular location is the lateral cell membrane. The protein localises to the cell membrane. The protein resides in the apical cell membrane. It localises to the membrane. It is found in the endosome membrane. Its subcellular location is the secreted. The protein localises to the extracellular space. The protein resides in the early endosome. It localises to the cytoplasmic vesicle membrane. It is found in the extracellular exosome. Its subcellular location is the cytoplasmic vesicle. The protein localises to the secretory vesicle lumen. The protein resides in the phagocytic cup. Its function is as follows. Plays important roles in the innate immune response as effector of glucocorticoid-mediated responses and regulator of the inflammatory process. Has anti-inflammatory activity. Plays a role in glucocorticoid-mediated down-regulation of the early phase of the inflammatory response. Contributes to the adaptive immune response by enhancing signaling cascades that are triggered by T-cell activation, regulates differentiation and proliferation of activated T-cells. Promotes the differentiation of T-cells into Th1 cells and negatively regulates differentiation into Th2 cells. Has no effect on unstimulated T-cells. Negatively regulates hormone exocytosis via activation of the formyl peptide receptors and reorganization of the actin cytoskeleton. Has high affinity for Ca(2+) and can bind up to eight Ca(2+) ions. Displays Ca(2+)-dependent binding to phospholipid membranes. Plays a role in the formation of phagocytic cups and phagosomes. Plays a role in phagocytosis by mediating the Ca(2+)-dependent interaction between phagosomes and the actin cytoskeleton. In terms of biological role, functions at least in part by activating the formyl peptide receptors and downstream signaling cascades. Promotes chemotaxis of granulocytes and monocytes via activation of the formyl peptide receptors. Promotes rearrangement of the actin cytoskeleton, cell polarization and cell migration. Promotes resolution of inflammation and wound healing. Acts via neutrophil N-formyl peptide receptors to enhance the release of CXCL2. This chain is Annexin A1 (ANXA1), found in Cavia cutleri (Guinea pig).